The sequence spans 199 residues: Sulfocyanin (199 aa).

A helical; Signal-anchor for type II membrane protein transmembrane segment spans residues 7-27 (VLPVVVGILVVIIAVAVGVYV). The 110-residue stretch at 79–188 (NFNGTSSGSL…SGMWAVLVAS (110 aa)) folds into the Plastocyanin-like domain. Cu cation contacts are provided by histidine 110, cysteine 171, histidine 176, and methionine 181.

It belongs to the multicopper oxidase family.

It is found in the cell membrane. In terms of biological role, the 4 redox proteins SoxE, SoxF, SoxG and SoxH probably form part of a membrane respiratory complex together with SoxM, a catalytic subunit of cytochrome oxidase. This chain is Sulfocyanin (soxE), found in Sulfolobus acidocaldarius (strain ATCC 33909 / DSM 639 / JCM 8929 / NBRC 15157 / NCIMB 11770).